The primary structure comprises 84 residues: U4-theraphotoxin-Hhn1ac (84 aa).

The N-terminal stretch at 1–22 (MKVTLIAILTCAAVLVLHTTAA) is a signal peptide. The propeptide occupies 23–47 (EELEESQLMEVGMPDTELAAVDEER). 3 disulfides stabilise this stretch: Cys-51/Cys-65, Cys-55/Cys-76, and Cys-70/Cys-81.

It belongs to the neurotoxin 12 (Hwtx-2) family. 02 (Hwtx-2) subfamily. In terms of tissue distribution, expressed by the venom gland.

Its subcellular location is the secreted. Postsynaptic neurotoxin. This chain is U4-theraphotoxin-Hhn1ac, found in Cyriopagopus hainanus (Chinese bird spider).